A 405-amino-acid chain; its full sequence is Palmitoyltransferase PFA3 (405 aa).

Topologically, residues 1–27 (MLISHPRIMIRHAPWVTSIETFCCSLA) are cytoplasmic. Residues 28–48 (TLFPKVFYTSVLTWSVYALIV) traverse the membrane as a helical segment. Topologically, residues 49-62 (HGCYDTLMTTQETS) are lumenal. A helical membrane pass occupies residues 63–83 (IFAIAIGLIGLTLYILCLYTY). Residues 84-214 (FKVLRAGPGS…GFYNHKFFAQ (131 aa)) lie on the Cytoplasmic side of the membrane. In terms of domain architecture, DHHC spans 167 to 217 (RYCTKCSVWKPDRCHHCSTCNRCVLRMDHHCPWFAMCVGFYNHKFFAQFLM). A helical membrane pass occupies residues 215 to 235 (FLMYLTAYSGFDFVVSLSILW). Residues 236-251 (KFFADEKYNDHYLSLN) are Lumenal-facing. The helical transmembrane segment at 252–272 (LVFLFVLSLAFFITVGGFSAF) threads the bilayer. Over 273 to 405 (SLYLVFRNKT…ANQTTDTNPF (133 aa)) the chain is Cytoplasmic.

Belongs to the DHHC palmitoyltransferase family. PFA3 subfamily. Post-translationally, autopalmitoylated.

It is found in the vacuole membrane. It catalyses the reaction L-cysteinyl-[protein] + hexadecanoyl-CoA = S-hexadecanoyl-L-cysteinyl-[protein] + CoA. Functionally, palmitoyltransferase specific for VAC8. Palmitoylates VAC8 at one or more of its N-terminal cysteine residues, which is required for its proper membrane localization. The sequence is that of Palmitoyltransferase PFA3 (PFA3) from Debaryomyces hansenii (strain ATCC 36239 / CBS 767 / BCRC 21394 / JCM 1990 / NBRC 0083 / IGC 2968) (Yeast).